The following is a 127-amino-acid chain: Putative platinum sensitivity protein 1 (127 aa).

In Saccharomyces cerevisiae (strain ATCC 204508 / S288c) (Baker's yeast), this protein is Putative platinum sensitivity protein 1 (PSY1).